Here is a 318-residue protein sequence, read N- to C-terminus: AT-hook motif nuclear-localized protein 7 (318 aa).

Disordered regions lie at residues 1–76 and 241–318; these read METS…PSSS and SDQQ…LPVD. The Bipartite nuclear localization signal signature appears at 56 to 64; that stretch reads KKRRGRPRK. The a.T hook DNA-binding region spans 56–68; that stretch reads KKRRGRPRKYEAN. The region spanning 120–259 is the PPC domain; it reads GSNFTPHVIT…RKQRVEHAPA (140 aa). A compositionally biased stretch (basic and acidic residues) spans 243 to 256; sequence QQDHQKPRKQRVEH. A compositionally biased stretch (pro residues) spans 264-274; it reads VPPPPSPPPPA. A compositionally biased stretch (polar residues) spans 288-312; the sequence is PPSSFGISSWTNGQDMPRNSATDIN.

The protein resides in the nucleus. Its function is as follows. Transcription factor that specifically binds AT-rich DNA sequences related to the nuclear matrix attachment regions (MARs). The protein is AT-hook motif nuclear-localized protein 7 of Arabidopsis thaliana (Mouse-ear cress).